The sequence spans 298 residues: Inosose dehydratase (298 aa).

This sequence belongs to the IolE/MocC family. It depends on glutathione as a cofactor. The cofactor is Co(2+). Requires Mn(2+) as cofactor.

The enzyme catalyses scyllo-inosose = 3D-3,5/4-trihydroxycyclohexane-1,2-dione + H2O. It functions in the pathway polyol metabolism; myo-inositol degradation into acetyl-CoA; acetyl-CoA from myo-inositol: step 2/7. Its function is as follows. Catalyzes the dehydration of inosose (2-keto-myo-inositol, 2KMI or 2,4,6/3,5-pentahydroxycyclohexanone) to 3D-(3,5/4)-trihydroxycyclohexane-1,2-dione (D-2,3-diketo-4-deoxy-epi-inositol). The polypeptide is Inosose dehydratase (Bacillus anthracis (strain CDC 684 / NRRL 3495)).